The following is a 1595-amino-acid chain: Pentafunctional AROM polypeptide (1595 aa).

The interval 1–384 is 3-dehydroquinate synthase; it reads MGVPTKISIL…HEPRASTVSN (384 aa). NAD(+)-binding positions include 44–46, 81–84, 114–116, and Asp-119; these read DTN, ESSK, and GGV. Arg-130 is a binding site for 7-phospho-2-dehydro-3-deoxy-D-arabino-heptonate. 139–140 provides a ligand contact to NAD(+); that stretch reads TT. Asp-146 and Lys-152 together coordinate 7-phospho-2-dehydro-3-deoxy-D-arabino-heptonate. Lys-161 serves as a coordination point for NAD(+). A 7-phospho-2-dehydro-3-deoxy-D-arabino-heptonate-binding site is contributed by Asn-162. NAD(+)-binding positions include 179 to 182 and Asn-190; that span reads FLNT. Glu-194 contributes to the Zn(2+) binding site. 7-phospho-2-dehydro-3-deoxy-D-arabino-heptonate-binding positions include 194–197 and Lys-250; that span reads EVIK. Residue Glu-260 is the Proton acceptor; for 3-dehydroquinate synthase activity of the active site. Residues 264–268 and His-271 each bind 7-phospho-2-dehydro-3-deoxy-D-arabino-heptonate; that span reads RNLLN. His-271 provides a ligand contact to Zn(2+). His-275 serves as the catalytic Proton acceptor; for 3-dehydroquinate synthase activity. The 7-phospho-2-dehydro-3-deoxy-D-arabino-heptonate site is built by His-287 and Lys-356. Residue His-287 participates in Zn(2+) binding. The interval 397-842 is EPSP synthase; sequence VSPGVPKGLD…WDSLAQTFKV (446 aa). The active-site For EPSP synthase activity is Cys-824. The shikimate kinase stretch occupies residues 866–1057; sequence ASIFIIGMRG…RRKENTFFVS (192 aa). Residue 872–879 participates in ATP binding; it reads GMRGAGKT. The tract at residues 1058 to 1278 is 3-dehydroquinase; the sequence is LTLPDLSLAA…AAPGQLSARE (221 aa). Residue His-1181 is the Proton acceptor; for 3-dehydroquinate dehydratase activity of the active site. Lys-1209 acts as the Schiff-base intermediate with substrate; for 3-dehydroquinate dehydratase activity in catalysis. Residues 1291-1595 form a shikimate dehydrogenase region; the sequence is AKKFAVIGNP…MGVSPSEDIL (305 aa).

In the N-terminal section; belongs to the sugar phosphate cyclases superfamily. Dehydroquinate synthase family. This sequence in the 2nd section; belongs to the EPSP synthase family. It in the 3rd section; belongs to the shikimate kinase family. The protein in the 4th section; belongs to the type-I 3-dehydroquinase family. In the C-terminal section; belongs to the shikimate dehydrogenase family. As to quaternary structure, homodimer. Requires Zn(2+) as cofactor.

Its subcellular location is the cytoplasm. The catalysed reaction is 7-phospho-2-dehydro-3-deoxy-D-arabino-heptonate = 3-dehydroquinate + phosphate. It carries out the reaction 3-dehydroquinate = 3-dehydroshikimate + H2O. It catalyses the reaction shikimate + NADP(+) = 3-dehydroshikimate + NADPH + H(+). The enzyme catalyses shikimate + ATP = 3-phosphoshikimate + ADP + H(+). The catalysed reaction is 3-phosphoshikimate + phosphoenolpyruvate = 5-O-(1-carboxyvinyl)-3-phosphoshikimate + phosphate. It participates in metabolic intermediate biosynthesis; chorismate biosynthesis; chorismate from D-erythrose 4-phosphate and phosphoenolpyruvate: step 2/7. The protein operates within metabolic intermediate biosynthesis; chorismate biosynthesis; chorismate from D-erythrose 4-phosphate and phosphoenolpyruvate: step 3/7. Its pathway is metabolic intermediate biosynthesis; chorismate biosynthesis; chorismate from D-erythrose 4-phosphate and phosphoenolpyruvate: step 4/7. It functions in the pathway metabolic intermediate biosynthesis; chorismate biosynthesis; chorismate from D-erythrose 4-phosphate and phosphoenolpyruvate: step 5/7. It participates in metabolic intermediate biosynthesis; chorismate biosynthesis; chorismate from D-erythrose 4-phosphate and phosphoenolpyruvate: step 6/7. The AROM polypeptide catalyzes 5 consecutive enzymatic reactions in prechorismate polyaromatic amino acid biosynthesis. The polypeptide is Pentafunctional AROM polypeptide (Ajellomyces capsulatus (strain G186AR / H82 / ATCC MYA-2454 / RMSCC 2432) (Darling's disease fungus)).